The primary structure comprises 324 residues: Large ribosomal subunit protein uL3m (324 aa).

The N-terminal 41 residues, 1 to 41 (MAAVPRGLLSRINQFLSIRSITPSSSESLPHCSSFFLIRRF), are a transit peptide targeting the mitochondrion. A disordered region spans residues 206-229 (PASHGASLSHRSGGSTGQRDAPGK).

The protein belongs to the universal ribosomal protein uL3 family. Part of the 50S ribosomal subunit.

It localises to the mitochondrion. Functionally, one of the primary rRNA binding proteins, it binds directly near the 3'-end of the 23S rRNA, where it nucleates assembly of the 50S subunit. This is Large ribosomal subunit protein uL3m from Arabidopsis thaliana (Mouse-ear cress).